Reading from the N-terminus, the 205-residue chain is Molybdenum cofactor guanylyltransferase (205 aa).

GTP-binding positions include 14–16 (LAG), Lys-27, Asp-77, and Asp-107. Asp-107 is a binding site for Mg(2+).

The protein belongs to the MobA family. In terms of assembly, monomer. It depends on Mg(2+) as a cofactor.

The protein resides in the cytoplasm. The catalysed reaction is Mo-molybdopterin + GTP + H(+) = Mo-molybdopterin guanine dinucleotide + diphosphate. In terms of biological role, transfers a GMP moiety from GTP to Mo-molybdopterin (Mo-MPT) cofactor (Moco or molybdenum cofactor) to form Mo-molybdopterin guanine dinucleotide (Mo-MGD) cofactor. The protein is Molybdenum cofactor guanylyltransferase of Burkholderia orbicola (strain MC0-3).